A 323-amino-acid polypeptide reads, in one-letter code: Transcription initiation factor IIB 7 (323 aa).

Over residues 1-16 the composition is skewed to basic and acidic residues; that stretch reads MTRSTRQRERETAAKQ. Positions 1-35 are disordered; it reads MTRSTRQRERETAAKQEEEEDSEEGVRECPECGSD. The segment at 24 to 56 adopts a TFIIB-type zinc-finger fold; it reads EGVRECPECGSDNLVKSSDRAELVCNDCGLVVE. Residues Cys29, Cys32, Cys48, and Cys51 each coordinate Zn(2+). 2 repeat units span residues 142–225 and 236–317.

It belongs to the TFIIB family.

Its function is as follows. Stabilizes TBP binding to an archaeal box-A promoter. Also responsible for recruiting RNA polymerase II to the pre-initiation complex (DNA-TBP-TFIIB). In Halobacterium salinarum (strain ATCC 700922 / JCM 11081 / NRC-1) (Halobacterium halobium), this protein is Transcription initiation factor IIB 7.